The primary structure comprises 209 residues: Floral homeotic protein GLOBOSA (209 aa).

In terms of domain architecture, MADS-box spans 3–57 (RGKIEIKRIENSSNRQVTYSKRRNGILKKAKEISVLCDARVSVIIFASSGKMHEF). Positions 82–173 (HENLDNEINK…QLEIASMNRN (92 aa)) constitute a K-box domain.

Expressed mainly in floral organs and, within the flower, expression is restricted to petals and stamens.

The protein localises to the nucleus. Transcription factor involved in the genetic control of flower development. Acts in conjunction with DEFICIENS (defA). The chain is Floral homeotic protein GLOBOSA (GLO) from Nicotiana tabacum (Common tobacco).